We begin with the raw amino-acid sequence, 251 residues long: NADPH-dependent oxidoreductase (251 aa).

This sequence belongs to the flavin oxidoreductase frp family. Requires FMN as cofactor.

Reduces FMN, organic nitro compounds and disulfide DTNB. Involved in maintenance of the cellular redox state and the disulfide stress response. In Staphylococcus aureus (strain MSSA476), this protein is NADPH-dependent oxidoreductase (nfrA).